We begin with the raw amino-acid sequence, 93 residues long: MATFKKFNKDKRPKRNTQSLLFKRKRFCRFTVAGVEEIDYKDVDTLRDFIAENGKIIPARLTGTRAIYQRQLNTAIKRARFLALLPYSDQHKI.

Belongs to the bacterial ribosomal protein bS18 family. Part of the 30S ribosomal subunit. Forms a tight heterodimer with protein bS6.

Binds as a heterodimer with protein bS6 to the central domain of the 16S rRNA, where it helps stabilize the platform of the 30S subunit. This is Small ribosomal subunit protein bS18 from Acidovorax ebreus (strain TPSY) (Diaphorobacter sp. (strain TPSY)).